Reading from the N-terminus, the 404-residue chain is Glucose-1-phosphate adenylyltransferase 2 (404 aa).

Residues Tyr97, Gly162, 177 to 178 (EK), and Ser195 each bind alpha-D-glucose 1-phosphate.

Belongs to the bacterial/plant glucose-1-phosphate adenylyltransferase family. Homotetramer.

It catalyses the reaction alpha-D-glucose 1-phosphate + ATP + H(+) = ADP-alpha-D-glucose + diphosphate. It functions in the pathway glycan biosynthesis; glycogen biosynthesis. In terms of biological role, involved in the biosynthesis of ADP-glucose, a building block required for the elongation reactions to produce glycogen. Catalyzes the reaction between ATP and alpha-D-glucose 1-phosphate (G1P) to produce pyrophosphate and ADP-Glc. The sequence is that of Glucose-1-phosphate adenylyltransferase 2 from Vibrio parahaemolyticus serotype O3:K6 (strain RIMD 2210633).